Here is a 170-residue protein sequence, read N- to C-terminus: Adenine phosphoribosyltransferase (170 aa).

Belongs to the purine/pyrimidine phosphoribosyltransferase family. As to quaternary structure, homodimer.

The protein localises to the cytoplasm. It catalyses the reaction AMP + diphosphate = 5-phospho-alpha-D-ribose 1-diphosphate + adenine. The protein operates within purine metabolism; AMP biosynthesis via salvage pathway; AMP from adenine: step 1/1. Functionally, catalyzes a salvage reaction resulting in the formation of AMP, that is energically less costly than de novo synthesis. The protein is Adenine phosphoribosyltransferase of Thermosynechococcus vestitus (strain NIES-2133 / IAM M-273 / BP-1).